A 545-amino-acid chain; its full sequence is 1,3-beta-glucanosyltransferase ARB_07487 (545 aa).

Positions 1 to 19 (MKFSSLAAATALVAGSVVA) are cleaved as a signal peptide. Residues Asn-51 and Asn-69 are each glycosylated (N-linked (GlcNAc...) asparagine). Residues Cys-88 and Cys-117 are joined by a disulfide bond. (1,3-beta-D-glucosyl)n-binding positions include Tyr-106, 133–141 (SEPSTSIIR), Asn-174, and Glu-175. The Proton donor role is filled by Glu-175. Asn-179 carries an N-linked (GlcNAc...) asparagine glycan. (1,3-beta-D-glucosyl)n contacts are provided by Asp-216 and Arg-221. 5 disulfides stabilise this stretch: Cys-230–Cys-363, Cys-248–Cys-279, Cys-384–Cys-437, Cys-393–Cys-464, and Cys-412–Cys-419. The active-site Nucleophile is the Glu-276. Residue Tyr-308 coordinates (1,3-beta-D-glucosyl)n. A disordered region spans residues 493 to 513 (GTGSVTSAPGSGGNKPDQGAA). Ala-512 carries the GPI-anchor amidated alanine lipid modification. A propeptide spans 513-545 (ASTISAPSVNLGIVKLGAYIFCAVLAGAGMILI) (removed in mature form).

It belongs to the glycosyl hydrolase 72 family. Post-translationally, the GPI-anchor is attached to the protein in the endoplasmic reticulum and serves to target the protein to the cell surface. There, the glucosamine-inositol phospholipid moiety is cleaved off and the GPI-modified mannoprotein is covalently attached via its lipidless GPI glycan remnant to the 1,6-beta-glucan of the outer cell wall layer.

The protein resides in the secreted. It localises to the cell membrane. It is found in the cell wall. Splits internally a 1,3-beta-glucan molecule and transfers the newly generated reducing end (the donor) to the non-reducing end of another 1,3-beta-glucan molecule (the acceptor) forming a 1,3-beta linkage, resulting in the elongation of 1,3-beta-glucan chains in the cell wall. Involved in cell wall biosynthesis and morphogenesis. This chain is 1,3-beta-glucanosyltransferase ARB_07487, found in Arthroderma benhamiae (strain ATCC MYA-4681 / CBS 112371) (Trichophyton mentagrophytes).